The following is an 86-amino-acid chain: Small ribosomal subunit protein uS17 (86 aa).

It belongs to the universal ribosomal protein uS17 family. Part of the 30S ribosomal subunit.

Functionally, one of the primary rRNA binding proteins, it binds specifically to the 5'-end of 16S ribosomal RNA. The protein is Small ribosomal subunit protein uS17 of Nitrosococcus oceani (strain ATCC 19707 / BCRC 17464 / JCM 30415 / NCIMB 11848 / C-107).